The sequence spans 155 residues: MSKLRSYKKIGGDYRYGDESVARFINAVMLDGKKAVATKIVYDAFSIISERNNGEDALEIYRKAISNIAPVVEVRSKRVGGATYQIPMEVKPSRRSALAFRWLKIYAGKRGGKSMAEKLAAELMDAANDQGASVKKRDEVHRMAEANKAFAHFRF.

The protein belongs to the universal ribosomal protein uS7 family. As to quaternary structure, part of the 30S ribosomal subunit. Contacts proteins S9 and S11.

Its function is as follows. One of the primary rRNA binding proteins, it binds directly to 16S rRNA where it nucleates assembly of the head domain of the 30S subunit. Is located at the subunit interface close to the decoding center, probably blocks exit of the E-site tRNA. This is Small ribosomal subunit protein uS7 from Chlorobium chlorochromatii (strain CaD3).